Here is a 430-residue protein sequence, read N- to C-terminus: Glutamate-1-semialdehyde 2,1-aminomutase (430 aa).

Lysine 267 bears the N6-(pyridoxal phosphate)lysine mark.

It belongs to the class-III pyridoxal-phosphate-dependent aminotransferase family. HemL subfamily. As to quaternary structure, homodimer. Pyridoxal 5'-phosphate is required as a cofactor.

The protein resides in the cytoplasm. It carries out the reaction (S)-4-amino-5-oxopentanoate = 5-aminolevulinate. It functions in the pathway porphyrin-containing compound metabolism; protoporphyrin-IX biosynthesis; 5-aminolevulinate from L-glutamyl-tRNA(Glu): step 2/2. In Thermomicrobium roseum (strain ATCC 27502 / DSM 5159 / P-2), this protein is Glutamate-1-semialdehyde 2,1-aminomutase.